The primary structure comprises 179 residues: MASMHEALFSSRLLQVNSSFSFRCALPIISSPAAVSCAIKSTQFFKQRCRTKVRDFSLSSLSRRGFVCRAAEYKFPDPIPEFAEAETEKFRDHMLNKLSKRDLFEDSVDEIVGVCTEIFETFLRSEYGGPGTLLVIPFIDMADTLNERELPGGPQAARAAIKWAQDHVDKDWKEWTGTD.

The transit peptide at 1–69 directs the protein to the chloroplast; the sequence is MASMHEALFS…SLSRRGFVCR (69 aa).

As to quaternary structure, binds DNA when in complex with CSP41b.

Its subcellular location is the plastid. It is found in the chloroplast stroma. It localises to the chloroplast nucleoid. Functionally, involved in redox-mediated retrograde signaling to synchronize the expression of photosynthetic genes from both the nuclear and plastidic genomes, especially in excess light conditions. Required for full expression of genes transcribed by the plastid-encoded RNA polymerase (PEP). Essential for embryo development. This is Protein PLASTID REDOX INSENSITIVE 2, chloroplastic from Arabidopsis thaliana (Mouse-ear cress).